The following is an 85-amino-acid chain: Kappa-theraphotoxin-Cg1d (85 aa).

The N-terminal stretch at methionine 1–alanine 21 is a signal peptide. A propeptide spanning residues alanine 22–glutamate 51 is cleaved from the precursor. 3 disulfide bridges follow: cysteine 52-cysteine 66, cysteine 59-cysteine 71, and cysteine 65-cysteine 78.

The protein belongs to the neurotoxin 10 (Hwtx-1) family. 28 (Jztx-11) subfamily. As to expression, expressed by the venom gland.

The protein resides in the secreted. Its function is as follows. Probable ion channel inhibitor. This is Kappa-theraphotoxin-Cg1d from Chilobrachys guangxiensis (Chinese earth tiger tarantula).